We begin with the raw amino-acid sequence, 845 residues long: Protein P (845 aa).

The segment at 1–179 is terminal protein domain (TP); it reads MPLSYQHFRK…FCGSPYSWEQ (179 aa). A spacer region spans residues 180 to 348; the sequence is ELQHGRLVIK…YCLSHLVNLR (169 aa). The disordered stretch occupies residues 226–245; the sequence is GLQPHQGPLASSQPGRSGSI. Residues 349 to 692 are polymerase/reverse transcriptase domain (RT); the sequence is EDWGPCDEHG…YMNLYPVARQ (344 aa). The Reverse transcriptase domain maps to 359–602; that stretch reads EHHIRIPRTP…YSLNFMGYII (244 aa). Mg(2+)-binding residues include Asp431, Asp553, and Asp554.

It belongs to the hepadnaviridae P protein family.

The catalysed reaction is DNA(n) + a 2'-deoxyribonucleoside 5'-triphosphate = DNA(n+1) + diphosphate. It carries out the reaction Endonucleolytic cleavage to 5'-phosphomonoester.. Its activity is regulated as follows. Activated by host HSP70 and HSP40 in vitro to be able to bind the epsilon loop of the pgRNA. Because deletion of the RNase H region renders the protein partly chaperone-independent, the chaperones may be needed indirectly to relieve occlusion of the RNA-binding site by this domain. Inhibited by several reverse-transcriptase inhibitors: Lamivudine, Adefovir and Entecavir. Functionally, multifunctional enzyme that converts the viral RNA genome into dsDNA in viral cytoplasmic capsids. This enzyme displays a DNA polymerase activity that can copy either DNA or RNA templates, and a ribonuclease H (RNase H) activity that cleaves the RNA strand of RNA-DNA heteroduplexes in a partially processive 3'- to 5'-endonucleasic mode. Neo-synthesized pregenomic RNA (pgRNA) are encapsidated together with the P protein, and reverse-transcribed inside the nucleocapsid. Initiation of reverse-transcription occurs first by binding the epsilon loop on the pgRNA genome, and is initiated by protein priming, thereby the 5'-end of (-)DNA is covalently linked to P protein. Partial (+)DNA is synthesized from the (-)DNA template and generates the relaxed circular DNA (RC-DNA) genome. After budding and infection, the RC-DNA migrates in the nucleus, and is converted into a plasmid-like covalently closed circular DNA (cccDNA). The activity of P protein does not seem to be necessary for cccDNA generation, and is presumably released from (+)DNA by host nuclear DNA repair machinery. In Homo sapiens (Human), this protein is Protein P.